A 79-amino-acid chain; its full sequence is Small ribosomal subunit protein bS18 (79 aa).

Belongs to the bacterial ribosomal protein bS18 family. Part of the 30S ribosomal subunit. Forms a tight heterodimer with protein bS6.

In terms of biological role, binds as a heterodimer with protein bS6 to the central domain of the 16S rRNA, where it helps stabilize the platform of the 30S subunit. In Bacillus subtilis (strain 168), this protein is Small ribosomal subunit protein bS18 (rpsR).